A 397-amino-acid polypeptide reads, in one-letter code: Elongation factor Tu (397 aa).

The tr-type G domain maps to Lys10–Gln207. Residues Gly19 to Thr26 are G1. Gly19 to Thr26 is a GTP binding site. Residue Thr26 participates in Mg(2+) binding. A G2 region spans residues Gly60 to Ala64. Positions Asp81–Gly84 are G3. Residues Asp81 to His85 and Asn136 to Asp139 contribute to the GTP site. Positions Asn136–Asp139 are G4. The tract at residues Ser174–Leu176 is G5.

It belongs to the TRAFAC class translation factor GTPase superfamily. Classic translation factor GTPase family. EF-Tu/EF-1A subfamily. As to quaternary structure, monomer.

It localises to the cytoplasm. The enzyme catalyses GTP + H2O = GDP + phosphate + H(+). GTP hydrolase that promotes the GTP-dependent binding of aminoacyl-tRNA to the A-site of ribosomes during protein biosynthesis. This chain is Elongation factor Tu, found in Nitratidesulfovibrio vulgaris (strain DSM 19637 / Miyazaki F) (Desulfovibrio vulgaris).